The primary structure comprises 167 residues: Ribosome-binding factor A (167 aa).

The tract at residues 127–167 is disordered; the sequence is SRANAQYAGDADPYKHDEPDDDDFDDDDDVEVEDWDDDDEA. Over residues 145–167 the composition is skewed to acidic residues; that stretch reads PDDDDFDDDDDVEVEDWDDDDEA.

It belongs to the RbfA family. As to quaternary structure, monomer. Binds 30S ribosomal subunits, but not 50S ribosomal subunits or 70S ribosomes.

It localises to the cytoplasm. In terms of biological role, one of several proteins that assist in the late maturation steps of the functional core of the 30S ribosomal subunit. Associates with free 30S ribosomal subunits (but not with 30S subunits that are part of 70S ribosomes or polysomes). Required for efficient processing of 16S rRNA. May interact with the 5'-terminal helix region of 16S rRNA. The protein is Ribosome-binding factor A of Bifidobacterium adolescentis (strain ATCC 15703 / DSM 20083 / NCTC 11814 / E194a).